The sequence spans 85 residues: Large ribosomal subunit protein bL27 (85 aa).

The protein belongs to the bacterial ribosomal protein bL27 family.

In Sodalis glossinidius (strain morsitans), this protein is Large ribosomal subunit protein bL27.